Reading from the N-terminus, the 174-residue chain is Mediator of RNA polymerase II transcription subunit 30 (174 aa).

Residues 113-166 adopt a coiled-coil conformation; it reads VEDDSSKLEDRMANQLRAASEERREVLEVNKKLKQKNQQLKMIMDQLRNLIWEI.

This sequence belongs to the Mediator complex subunit 30 family. Component of the Mediator complex.

It localises to the nucleus. Component of the Mediator complex, a coactivator involved in the regulated transcription of nearly all RNA polymerase II-dependent genes. Mediator functions as a bridge to convey information from gene-specific regulatory proteins to the basal RNA polymerase II transcription machinery. Mediator is recruited to promoters by direct interactions with regulatory proteins and serves as a scaffold for the assembly of a functional preinitiation complex with RNA polymerase II and the general transcription factors. The chain is Mediator of RNA polymerase II transcription subunit 30 (med30) from Danio rerio (Zebrafish).